A 1090-amino-acid polypeptide reads, in one-letter code: Exoglucanase B (1090 aa).

A signal peptide spans 1 to 33; it reads MSSTTRRRSAWVAAATVGVSSFLAVAGITPAIA. The propeptide occupies 34–53; sequence AAGAGQPATVTVPAASPVRA. Residues 54-699 form a catalytic region; that stretch reads AVDGEYAQRF…RLFDDGTTTP (646 aa). Catalysis depends on Asp513, which acts as the Nucleophile. 3 consecutive Fibronectin type-III domains span residues 706–791, 797–887, and 897–984; these read VPTG…TKAT, APSV…TKSD, and VPAG…TKTP. Positions 983 to 1090 constitute a CBM2 domain; that stretch reads TPQTGGSCSV…SFTLNGASCT (108 aa). A disulfide bridge links Cys990 with Cys1089. A disordered region spans residues 1069-1090; the sequence is NGSHTGQNPNPASFTLNGASCT. The span at 1070–1090 shows a compositional bias: polar residues; the sequence is GSHTGQNPNPASFTLNGASCT.

The protein belongs to the glycosyl hydrolase 48 (cellulase L) family.

The enzyme catalyses Hydrolysis of (1-&gt;4)-beta-D-glucosidic linkages in cellulose and cellotetraose, releasing cellobiose from the non-reducing ends of the chains.. Its function is as follows. Hydrolyzes cellohexaose to a mixture of cellotetraose, cellotriose and cellobiose, with only a trace of glucose. It hydrolyzed cellopentaose to cellotriose and cellobiose, and cellotetraose to cellobiose, but it did not hydrolyze cellotriose. Also has weak endoglucanase activity. Hydrolyzes glucosidic bonds with inversion of anomeric configuration. The chain is Exoglucanase B (cbhB) from Cellulomonas fimi (strain ATCC 484 / DSM 20113 / JCM 1341 / CCUG 24087 / LMG 16345 / NBRC 15513 / NCIMB 8980 / NCTC 7547 / NRS-133).